The sequence spans 151 residues: Transcription antitermination protein NusB (151 aa).

This sequence belongs to the NusB family.

Involved in transcription antitermination. Required for transcription of ribosomal RNA (rRNA) genes. Binds specifically to the boxA antiterminator sequence of the ribosomal RNA (rrn) operons. This is Transcription antitermination protein NusB from Thermodesulfovibrio yellowstonii (strain ATCC 51303 / DSM 11347 / YP87).